We begin with the raw amino-acid sequence, 204 residues long: NADH-quinone oxidoreductase subunit C (204 aa).

Belongs to the complex I 30 kDa subunit family. As to quaternary structure, NDH-1 is composed of 14 different subunits. Subunits NuoB, C, D, E, F, and G constitute the peripheral sector of the complex.

It localises to the cell inner membrane. The catalysed reaction is a quinone + NADH + 5 H(+)(in) = a quinol + NAD(+) + 4 H(+)(out). In terms of biological role, NDH-1 shuttles electrons from NADH, via FMN and iron-sulfur (Fe-S) centers, to quinones in the respiratory chain. The immediate electron acceptor for the enzyme in this species is believed to be ubiquinone. Couples the redox reaction to proton translocation (for every two electrons transferred, four hydrogen ions are translocated across the cytoplasmic membrane), and thus conserves the redox energy in a proton gradient. The chain is NADH-quinone oxidoreductase subunit C from Vesicomyosocius okutanii subsp. Calyptogena okutanii (strain HA).